We begin with the raw amino-acid sequence, 540 residues long: IQ motif and ankyrin repeat domain-containing protein 1 (540 aa).

The span at 1 to 17 (MSTKKGGPKAASGKGQA) shows a compositional bias: low complexity. A disordered region spans residues 1 to 62 (MSTKKGGPKA…PQAPAAPTAE (62 aa)). In terms of domain architecture, IQ spans 62 to 91 (EDKAAIVIQCAFRQYLARRELARRCQERQE). 2 ANK repeats span residues 191–220 (HGNT…NPNT) and 224–253 (FGRT…DPRM). Positions 281–388 (LTEAMLKNME…EETLAMARLE (108 aa)) form a coiled coil.

In Mus musculus (Mouse), this protein is IQ motif and ankyrin repeat domain-containing protein 1.